The chain runs to 1454 residues: Alpha-2-macroglobulin-like protein 1 (1454 aa).

The N-terminal stretch at 1 to 17 (MWAQLLLGMLALSPAIA) is a signal peptide. A disulfide bond links Cys-40 and Cys-78. Residue Asn-120 is glycosylated (N-linked (GlcNAc...) asparagine). Cystine bridges form between Cys-241/Cys-291 and Cys-259/Cys-279. Asn-281 and Asn-409 each carry an N-linked (GlcNAc...) asparagine glycan. 7 disulfide bridges follow: Cys-464–Cys-557, Cys-589–Cys-769, Cys-819–Cys-847, Cys-845–Cys-881, Cys-919–Cys-1307, Cys-1075–Cys-1123, and Cys-1338–Cys-1453. The tract at residues 695–726 (SHRSPEYSTAMGAGGGHPEAFESSTPLHQAED) is bait region. An N-linked (GlcNAc...) asparagine glycan is attached at Asn-857. Positions 970-973 (CGEQ) form a cross-link, isoglutamyl cysteine thioester (Cys-Gln). The N-linked (GlcNAc...) asparagine glycan is linked to Asn-1020.

The protein belongs to the protease inhibitor I39 (alpha-2-macroglobulin) family. Monomer. In the epidermis, expressed predominantly in the granular layer at the apical edge of keratinocytes (at protein level). Also detected in placenta, testis and thymus but not in epithelia of kidney, lung, small intestine or colon.

It is found in the secreted. In terms of biological role, is able to inhibit all four classes of proteinases by a unique 'trapping' mechanism. This protein has a peptide stretch, called the 'bait region' which contains specific cleavage sites for different proteinases. When a proteinase cleaves the bait region, a conformational change is induced in the protein which traps the proteinase. The entrapped enzyme remains active against low molecular weight substrates (activity against high molecular weight substrates is greatly reduced). Following cleavage in the bait region a thioester bond is hydrolyzed and mediates the covalent binding of the protein to the proteinase. Displays inhibitory activity against chymotrypsin, papain, thermolysin, subtilisin A and, to a lesser extent, elastase but not trypsin. May play an important role during desquamation by inhibiting extracellular proteases. This chain is Alpha-2-macroglobulin-like protein 1, found in Homo sapiens (Human).